The sequence spans 196 residues: Molybdopterin synthase catalytic subunit (196 aa).

Residues 110 to 111 (HR), K126, and 133 to 135 (KKE) contribute to the substrate site. The tract at residues 142-196 (GGIWRANRDGAVGERVDEDEEKKKPDMGPHGPILRPSRPGERGHGPVVRNHQLGS) is disordered. Basic and acidic residues predominate over residues 147 to 168 (ANRDGAVGERVDEDEEKKKPDM).

The protein belongs to the MoaE family. MOCS2B subfamily. As to quaternary structure, heterotetramer; composed of 2 small (MOCS2A) and 2 large (MOCS2B) subunits.

The protein resides in the cytoplasm. The enzyme catalyses 2 [molybdopterin-synthase sulfur-carrier protein]-C-terminal-Gly-aminoethanethioate + cyclic pyranopterin phosphate + H2O = molybdopterin + 2 [molybdopterin-synthase sulfur-carrier protein]-C-terminal Gly-Gly + 2 H(+). The protein operates within cofactor biosynthesis; molybdopterin biosynthesis. In terms of biological role, catalytic subunit of the molybdopterin synthase complex, a complex that catalyzes the conversion of precursor Z into molybdopterin. Acts by mediating the incorporation of 2 sulfur atoms from thiocarboxylated MOCS2A into precursor Z to generate a dithiolene group. The chain is Molybdopterin synthase catalytic subunit from Sclerotinia sclerotiorum (strain ATCC 18683 / 1980 / Ss-1) (White mold).